Here is a 427-residue protein sequence, read N- to C-terminus: Enolase (427 aa).

Residue glutamine 163 participates in (2R)-2-phosphoglycerate binding. The active-site Proton donor is glutamate 205. Residues aspartate 242, glutamate 285, and aspartate 312 each coordinate Mg(2+). 4 residues coordinate (2R)-2-phosphoglycerate: lysine 337, arginine 366, serine 367, and lysine 388. Lysine 337 functions as the Proton acceptor in the catalytic mechanism.

This sequence belongs to the enolase family. It depends on Mg(2+) as a cofactor.

The protein resides in the cytoplasm. It localises to the secreted. The protein localises to the cell surface. It carries out the reaction (2R)-2-phosphoglycerate = phosphoenolpyruvate + H2O. The protein operates within carbohydrate degradation; glycolysis; pyruvate from D-glyceraldehyde 3-phosphate: step 4/5. Its function is as follows. Catalyzes the reversible conversion of 2-phosphoglycerate (2-PG) into phosphoenolpyruvate (PEP). It is essential for the degradation of carbohydrates via glycolysis. This chain is Enolase, found in Burkholderia multivorans (strain ATCC 17616 / 249).